The sequence spans 438 residues: tRNA(Ile)-lysidine synthase (438 aa).

19 to 24 (SGGIDS) contributes to the ATP binding site.

Belongs to the tRNA(Ile)-lysidine synthase family.

It localises to the cytoplasm. The catalysed reaction is cytidine(34) in tRNA(Ile2) + L-lysine + ATP = lysidine(34) in tRNA(Ile2) + AMP + diphosphate + H(+). In terms of biological role, ligates lysine onto the cytidine present at position 34 of the AUA codon-specific tRNA(Ile) that contains the anticodon CAU, in an ATP-dependent manner. Cytidine is converted to lysidine, thus changing the amino acid specificity of the tRNA from methionine to isoleucine. The protein is tRNA(Ile)-lysidine synthase of Buchnera aphidicola subsp. Baizongia pistaciae (strain Bp).